We begin with the raw amino-acid sequence, 336 residues long: Phosphoribosylformylglycinamidine cyclo-ligase (336 aa).

It belongs to the AIR synthase family.

The protein localises to the cytoplasm. The catalysed reaction is 2-formamido-N(1)-(5-O-phospho-beta-D-ribosyl)acetamidine + ATP = 5-amino-1-(5-phospho-beta-D-ribosyl)imidazole + ADP + phosphate + H(+). It functions in the pathway purine metabolism; IMP biosynthesis via de novo pathway; 5-amino-1-(5-phospho-D-ribosyl)imidazole from N(2)-formyl-N(1)-(5-phospho-D-ribosyl)glycinamide: step 2/2. The chain is Phosphoribosylformylglycinamidine cyclo-ligase from Thermoanaerobacter sp. (strain X514).